Here is a 124-residue protein sequence, read N- to C-terminus: Large ribosomal subunit protein bL17 (124 aa).

This sequence belongs to the bacterial ribosomal protein bL17 family. As to quaternary structure, part of the 50S ribosomal subunit. Contacts protein L32.

This chain is Large ribosomal subunit protein bL17, found in Acidithiobacillus ferrooxidans (strain ATCC 23270 / DSM 14882 / CIP 104768 / NCIMB 8455) (Ferrobacillus ferrooxidans (strain ATCC 23270)).